Consider the following 318-residue polypeptide: MVFFPHRHLIGIKGLTEQDITYLLDKADEAVKISRQREKKTSTLRGLTQINLFFEASTRTQASFELAGKRLGADVMNMSVGNSSVKKGETLIDTAMTLNAMRPDVLVIRHSSAGAAALLAQKVSCSVVNAGDGQHEHPTQALLDALTIRRAKGKLSRIIVAICGDVLHSRVARSNILLLNAMGARVRVVAPATLLPSGIAEMGVEVFHSMQEGLKDADVVMMLRLQRERMSGAFVPSVREYYHFYGLDAETLKAAKEDTLVMHPGPMNRGVEIASEVADGPQSVIAEQVEMGVAVRMAVMETLLVSQNQGPRTDGMKA.

Positions 59 and 60 each coordinate carbamoyl phosphate. Residue Lys-87 coordinates L-aspartate. Carbamoyl phosphate-binding residues include Arg-109, His-137, and Gln-140. Residues Arg-170 and Arg-224 each coordinate L-aspartate. Carbamoyl phosphate-binding residues include Gly-265 and Pro-266.

Belongs to the aspartate/ornithine carbamoyltransferase superfamily. ATCase family. Heterododecamer (2C3:3R2) of six catalytic PyrB chains organized as two trimers (C3), and six regulatory PyrI chains organized as three dimers (R2).

It catalyses the reaction carbamoyl phosphate + L-aspartate = N-carbamoyl-L-aspartate + phosphate + H(+). Its pathway is pyrimidine metabolism; UMP biosynthesis via de novo pathway; (S)-dihydroorotate from bicarbonate: step 2/3. Catalyzes the condensation of carbamoyl phosphate and aspartate to form carbamoyl aspartate and inorganic phosphate, the committed step in the de novo pyrimidine nucleotide biosynthesis pathway. The sequence is that of Aspartate carbamoyltransferase catalytic subunit from Rhizobium etli (strain CIAT 652).